Consider the following 403-residue polypeptide: Coenzyme A biosynthesis bifunctional protein CoaBC (403 aa).

The segment at 1-197 (MLHHVKLIYA…LHPKSLEGKR (197 aa)) is phosphopantothenoylcysteine decarboxylase. The segment at 198–403 (VLVTAGATRE…RLWDEIEKML (206 aa)) is phosphopantothenate--cysteine ligase. Residues Asp287, Lys297, and Phe330 each coordinate CTP.

It in the N-terminal section; belongs to the HFCD (homo-oligomeric flavin containing Cys decarboxylase) superfamily. This sequence in the C-terminal section; belongs to the PPC synthetase family. It depends on Mg(2+) as a cofactor. FMN serves as cofactor.

It carries out the reaction N-[(R)-4-phosphopantothenoyl]-L-cysteine + H(+) = (R)-4'-phosphopantetheine + CO2. The catalysed reaction is (R)-4'-phosphopantothenate + L-cysteine + CTP = N-[(R)-4-phosphopantothenoyl]-L-cysteine + CMP + diphosphate + H(+). It participates in cofactor biosynthesis; coenzyme A biosynthesis. Functionally, catalyzes two sequential steps in the biosynthesis of coenzyme A. In the first step cysteine is conjugated to 4'-phosphopantothenate to form 4-phosphopantothenoylcysteine. In the second step the latter compound is decarboxylated to form 4'-phosphopantotheine. This Thermococcus kodakarensis (strain ATCC BAA-918 / JCM 12380 / KOD1) (Pyrococcus kodakaraensis (strain KOD1)) protein is Coenzyme A biosynthesis bifunctional protein CoaBC.